A 142-amino-acid chain; its full sequence is Lysozyme X (142 aa).

The signal sequence occupies residues 1–19; it reads MRALLGICVLALVTPAVLG. A C-type lysozyme domain is found at 20 to 142; it reads RTMDRCSLAR…YLPPIDDCFV (123 aa). 4 disulfides stabilise this stretch: Cys25-Cys140, Cys46-Cys130, Cys81-Cys97, and Cys93-Cys111. Catalysis depends on residues Glu51 and Asp69.

This sequence belongs to the glycosyl hydrolase 22 family. As to expression, found in the midgut.

The enzyme catalyses Hydrolysis of (1-&gt;4)-beta-linkages between N-acetylmuramic acid and N-acetyl-D-glucosamine residues in a peptidoglycan and between N-acetyl-D-glucosamine residues in chitodextrins.. Unlikely to play an active role in the humoral immune defense. May have a function in the digestion of bacteria in the food. May be involved in the clearance of bacteria from the larval gut before metamorphosis. The sequence is that of Lysozyme X (LysX) from Drosophila melanogaster (Fruit fly).